A 362-amino-acid polypeptide reads, in one-letter code: Sulfoquinovose monooxygenase (362 aa).

The protein belongs to the SsuD family.

The catalysed reaction is 6-sulfo-D-quinovose + FMNH2 + O2 = 6-dehydro-D-glucose + FMN + sulfite + H2O + 2 H(+). Functionally, part of the alkanesulfonate monooxygenase (sulfo-ASMO) pathway, a D-sulfoquinovose degradation pathway that enables the complete utilization of all carbons within sulfoquinovose (SQ) with concomitant production of inorganic sulfite. Catalyzes the oxidative desulfurization of sulfoquinovose to sulfite and 6-dehydro-D-glucose. The chain is Sulfoquinovose monooxygenase from Novosphingobium aromaticivorans (strain ATCC 700278 / DSM 12444 / CCUG 56034 / CIP 105152 / NBRC 16084 / F199).